Reading from the N-terminus, the 443-residue chain is Tol-Pal system protein TolB (443 aa).

Residues 1–33 (MKIGIINTKIRTVFSAFACMIAASLVCTMPARA) form the signal peptide.

It belongs to the TolB family. The Tol-Pal system is composed of five core proteins: the inner membrane proteins TolA, TolQ and TolR, the periplasmic protein TolB and the outer membrane protein Pal. They form a network linking the inner and outer membranes and the peptidoglycan layer.

It is found in the periplasm. Its function is as follows. Part of the Tol-Pal system, which plays a role in outer membrane invagination during cell division and is important for maintaining outer membrane integrity. This Brucella canis (strain ATCC 23365 / NCTC 10854 / RM-666) protein is Tol-Pal system protein TolB.